We begin with the raw amino-acid sequence, 669 residues long: GTP-binding protein 1 (669 aa).

Residues 1–32 (MAAERSRSPVDSPVPASMFAPEPSSPGAARAA) are disordered. A phosphoserine mark is found at S6, S8, S12, S24, S25, S44, S47, and S69. The region spanning 158-389 (FLEVRVAVVG…LNLLSPRTSY (232 aa)) is the tr-type G domain. A G1 region spans residues 167–174 (GNVDAGKS). 167 to 174 (GNVDAGKS) is a GTP binding site. Residues 206 to 210 (GRTSS) form a G2 region. The tract at residues 252–255 (DLAG) is G3. Residues 252-256 (DLAGH) and 308-311 (TKID) contribute to the GTP site. Residues 308 to 311 (TKID) form a G4 region. A G5 region spans residues 366 to 368 (SNV). 2 stretches are compositionally biased toward polar residues: residues 573 to 595 (LLQTTNNSPMNSKPQQIKMQSTK) and 620 to 637 (DEASSLGTTQAATSSGLQ). A disordered region spans residues 573–669 (LLQTTNNSPM…GACVTPASGC (97 aa)). Position 580 is a phosphoserine (S580). The segment covering 646 to 657 (GRRRGGQRHKVK) has biased composition (basic residues).

This sequence belongs to the TRAFAC class translation factor GTPase superfamily. Classic translation factor GTPase family. GTPBP1 subfamily. Interacts with EXOSC2/RRP4, EXOSC3/RRP40, EXOSC5/RRP46, HNRNPD, HNRNPR and SYNCRIP. Identified in a complex with HNRNPD, HNRNPL, HNRNPQ, HNRNPR, HNRNPU and AANAT mRNA, but does not bind mRNA by itself. Detected in pineal gland (at protein level).

It localises to the cytoplasm. In terms of biological role, promotes degradation of target mRNA species. Plays a role in the regulation of circadian mRNA stability. Binds GTP and has GTPase activity. In Rattus norvegicus (Rat), this protein is GTP-binding protein 1 (Gtpbp1).